We begin with the raw amino-acid sequence, 184 residues long: Large ribosomal subunit protein uL22 (184 aa).

A disordered region spans residues 160 to 184; it reads PEEEVAQKKKISQKKLKKQKLMARE. Residues 167–184 show a composition bias toward basic residues; the sequence is KKKISQKKLKKQKLMARE.

It belongs to the universal ribosomal protein uL22 family. Component of the large ribosomal subunit.

The protein localises to the cytoplasm. In terms of biological role, component of the large ribosomal subunit. The ribosome is a large ribonucleoprotein complex responsible for the synthesis of proteins in the cell. This chain is Large ribosomal subunit protein uL22 (RPL17), found in Bos taurus (Bovine).